Consider the following 556-residue polypeptide: PPE family protein PPE2 (556 aa).

Residues 8-164 (ASPPEVHSAL…ASYQAVSTAA (157 aa)) form a PPE region. The segment at 201-256 (QKIGYTDFYNNVIQPFINWLTNLPFLQAMFSGFDPWLPSLGNPLTFLSPANIAFAL) is SH3-like. Positions 319–340 (LEQTLALLPAALPLLAAPLAPL) are leucine zipper motif. 2 disordered regions span residues 385 to 418 (TPTP…PPVT) and 443 to 556 (GTGV…TRVE). Positions 400 to 417 (PTPPPGPPPPPVTAPPPV) are enriched in pro residues. Over residues 456 to 471 (AEAPAAAAAPEEQVQP) the composition is skewed to low complexity. Positions 472–481 (QRRRRPKIKQ) are enriched in basic residues. The Nuclear localization signal motif lies at 473–481 (RRRRPKIKQ).

The protein belongs to the mycobacterial PPE family.

The protein localises to the secreted. It localises to the host cytoplasm. It is found in the host nucleus. Functionally, inhibits nitric oxide (NO) production in activated macrophages. Acts by inhibiting expression of the host inducible nitric oxide synthase (iNOS). PPE2 is translocated into the host macrophage nucleus, where it interacts with a GATA-binding site overlapping with the TATA box of NOS2 (iNOS) promoter, and strongly inhibits NOS2 gene transcription. Reduction in NO production in turn facilitates intracellular survival of the bacilli inside the macrophage. In addition, disrupts the assembly of NADPH oxidase complex, which inhibits NADPH oxidase-mediated reactive oxygen species (ROS) generation in macrophages and favors M.tuberculosis survival. Acts by interacting with NCF2, the cytosolic subunit of NADPH oxidase, and preventing translocation of NCF2 and NCF1 to the membrane, which causes a reduction of the functional assembly of NADPH oxidase complex and a decrease in NADPH oxidase activity. This Mycobacterium tuberculosis (strain ATCC 25618 / H37Rv) protein is PPE family protein PPE2 (PPE2).